A 229-amino-acid polypeptide reads, in one-letter code: Leucyl/phenylalanyl-tRNA--protein transferase (229 aa).

The protein belongs to the L/F-transferase family.

The protein localises to the cytoplasm. The enzyme catalyses N-terminal L-lysyl-[protein] + L-leucyl-tRNA(Leu) = N-terminal L-leucyl-L-lysyl-[protein] + tRNA(Leu) + H(+). It catalyses the reaction N-terminal L-arginyl-[protein] + L-leucyl-tRNA(Leu) = N-terminal L-leucyl-L-arginyl-[protein] + tRNA(Leu) + H(+). It carries out the reaction L-phenylalanyl-tRNA(Phe) + an N-terminal L-alpha-aminoacyl-[protein] = an N-terminal L-phenylalanyl-L-alpha-aminoacyl-[protein] + tRNA(Phe). Functionally, functions in the N-end rule pathway of protein degradation where it conjugates Leu, Phe and, less efficiently, Met from aminoacyl-tRNAs to the N-termini of proteins containing an N-terminal arginine or lysine. The protein is Leucyl/phenylalanyl-tRNA--protein transferase of Pseudomonas syringae pv. tomato (strain ATCC BAA-871 / DC3000).